The primary structure comprises 192 residues: dTTP/UTP pyrophosphatase (192 aa).

The Proton acceptor role is filled by aspartate 71.

It belongs to the Maf family. YhdE subfamily. A divalent metal cation serves as cofactor.

Its subcellular location is the cytoplasm. It catalyses the reaction dTTP + H2O = dTMP + diphosphate + H(+). It carries out the reaction UTP + H2O = UMP + diphosphate + H(+). Nucleoside triphosphate pyrophosphatase that hydrolyzes dTTP and UTP. May have a dual role in cell division arrest and in preventing the incorporation of modified nucleotides into cellular nucleic acids. The protein is dTTP/UTP pyrophosphatase of Clostridium kluyveri (strain NBRC 12016).